We begin with the raw amino-acid sequence, 166 residues long: Small ribosomal subunit protein uS5 (166 aa).

Positions 12 to 75 (YIEKLVQVNR…EAARRNMIQV (64 aa)) constitute an S5 DRBM domain.

The protein belongs to the universal ribosomal protein uS5 family. Part of the 30S ribosomal subunit. Contacts proteins S4 and S8.

Functionally, with S4 and S12 plays an important role in translational accuracy. Located at the back of the 30S subunit body where it stabilizes the conformation of the head with respect to the body. This chain is Small ribosomal subunit protein uS5, found in Pseudomonas fluorescens (strain ATCC BAA-477 / NRRL B-23932 / Pf-5).